We begin with the raw amino-acid sequence, 111 residues long: Toxin 3FTx-Tel4 (111 aa).

An N-terminal signal peptide occupies residues 1–19 (MKTLLLALVVVAFMCLGSA). Residues 20 to 34 (DQLGLGSQRIDWEQG) constitute a propeptide that is removed on maturation. Glutamine 35 is subject to Pyrrolidone carboxylic acid. Disulfide bonds link cysteine 44-cysteine 68, cysteine 47-cysteine 55, cysteine 61-cysteine 87, cysteine 91-cysteine 102, and cysteine 103-cysteine 108.

The protein belongs to the three-finger toxin family. Ancestral subfamily. Boigatoxin sub-subfamily. As to expression, expressed by the venom gland.

Its subcellular location is the secreted. Functionally, potent postsynaptic neurotoxin. Displays readily reversible competitive antagonism at the nicotinic acetylcholine receptor (nAChR). The sequence is that of Toxin 3FTx-Tel4 from Telescopus dhara (Egyptian catsnake).